Consider the following 139-residue polypeptide: MLEEFKKFALRGNVVDLAVGVIIGAAFGAIVNSAVQDIFMPVIGAITGGLDFSNYYIPLSSKVQSGLPYVDAKKQGAVIGYGQFLTLTLNFAIVAFVLFLVIRAMNRLQLAETKKPDEVPADVKLLSEIRDILATKPRV.

Helical transmembrane passes span 14-34, 38-58, and 82-102; these read VVDL…VNSA, IFMP…YYIP, and GQFL…FLVI.

The protein belongs to the MscL family. As to quaternary structure, homopentamer.

The protein localises to the cell inner membrane. In terms of biological role, channel that opens in response to stretch forces in the membrane lipid bilayer. May participate in the regulation of osmotic pressure changes within the cell. The protein is Large-conductance mechanosensitive channel of Methylobacterium radiotolerans (strain ATCC 27329 / DSM 1819 / JCM 2831 / NBRC 15690 / NCIMB 10815 / 0-1).